A 417-amino-acid chain; its full sequence is Gamma-glutamyl phosphate reductase (417 aa).

Belongs to the gamma-glutamyl phosphate reductase family.

It localises to the cytoplasm. The enzyme catalyses L-glutamate 5-semialdehyde + phosphate + NADP(+) = L-glutamyl 5-phosphate + NADPH + H(+). Its pathway is amino-acid biosynthesis; L-proline biosynthesis; L-glutamate 5-semialdehyde from L-glutamate: step 2/2. Catalyzes the NADPH-dependent reduction of L-glutamate 5-phosphate into L-glutamate 5-semialdehyde and phosphate. The product spontaneously undergoes cyclization to form 1-pyrroline-5-carboxylate. In Escherichia coli O7:K1 (strain IAI39 / ExPEC), this protein is Gamma-glutamyl phosphate reductase.